A 262-amino-acid polypeptide reads, in one-letter code: Type III pantothenate kinase (262 aa).

9–16 (DIGNTNIV) lines the ATP pocket. Substrate-binding positions include Tyr-103 and 110-113 (GVDR). Asp-112 acts as the Proton acceptor in catalysis. Asp-132 serves as a coordination point for K(+). Thr-135 is an ATP binding site. Thr-187 is a binding site for substrate.

The protein belongs to the type III pantothenate kinase family. In terms of assembly, homodimer. The cofactor is NH4(+). Requires K(+) as cofactor.

The protein resides in the cytoplasm. It carries out the reaction (R)-pantothenate + ATP = (R)-4'-phosphopantothenate + ADP + H(+). The protein operates within cofactor biosynthesis; coenzyme A biosynthesis; CoA from (R)-pantothenate: step 1/5. Catalyzes the phosphorylation of pantothenate (Pan), the first step in CoA biosynthesis. This Finegoldia magna (strain ATCC 29328 / DSM 20472 / WAL 2508) (Peptostreptococcus magnus) protein is Type III pantothenate kinase.